A 518-amino-acid polypeptide reads, in one-letter code: MTRSIAAAYRAGELPAFFRLPAGDLAAAASEPRLDVDRAALADALRAYHRDLGTLDSGVEAQLTRLAHPASRVVVTGQQAGLLTGPAYSVHKGADAALLARQLDREDAPVIPVYWVASQDHDAAEVASTTLLDHAEELHRLTLDLPQGVPVGRVPWQPEWTAAVLKLLDRFDTAPEYRAAVRARVEQAIRGGGSFADVFARLIHGLLAPTGLLVLDPLHPALAHLMAPTLARELACPLEGPARIEAAARRLEAVGFPPQLRRPAGATNLFLEEEDGQRRLLRFDGRQFHTDTRLYTREELLAVLEAGPTRLTPAAGLRPVVQDALLPTLAFVVGPGEIAYGAQLREVYELHGLRQPLLWPRLSVTWLEPNVVRLLSRLQATAAEVQADPEGVLGRALARERGAAAASAERLAALDAELRALTAELAALDPTLEGAAERTRARTTARVAHLQTLALRALARQEDERARQLTRLKRHLLPNGVPQEREMNFLTFLLKHGEEPLRKLLSLPPGAQAEVPLS.

Residues Ala404 to Arg474 adopt a coiled-coil conformation.

This sequence belongs to the BshC family.

The polypeptide is Putative cysteine ligase BshC (Deinococcus geothermalis (strain DSM 11300 / CIP 105573 / AG-3a)).